Reading from the N-terminus, the 585-residue chain is Glutathione S-transferase C-terminal domain-containing protein homolog (585 aa).

The GST C-terminal domain maps to 120-275; sequence LGFKGSCLLA…DKCARVLRDL (156 aa).

This sequence belongs to the GSTCD family.

The polypeptide is Glutathione S-transferase C-terminal domain-containing protein homolog (Drosophila melanogaster (Fruit fly)).